Reading from the N-terminus, the 396-residue chain is Elongation factor Tu (396 aa).

Residues lysine 10–glutamate 206 form the tr-type G domain. A G1 region spans residues glycine 19–threonine 26. Glycine 19–threonine 26 serves as a coordination point for GTP. Threonine 26 provides a ligand contact to Mg(2+). Residues glycine 60–asparagine 64 form a G2 region. The tract at residues aspartate 81 to glycine 84 is G3. GTP-binding positions include aspartate 81 to histidine 85 and asparagine 136 to aspartate 139. The G4 stretch occupies residues asparagine 136–aspartate 139. The G5 stretch occupies residues serine 174–leucine 176.

Belongs to the TRAFAC class translation factor GTPase superfamily. Classic translation factor GTPase family. EF-Tu/EF-1A subfamily. As to quaternary structure, monomer.

Its subcellular location is the cytoplasm. The enzyme catalyses GTP + H2O = GDP + phosphate + H(+). Functionally, GTP hydrolase that promotes the GTP-dependent binding of aminoacyl-tRNA to the A-site of ribosomes during protein biosynthesis. This chain is Elongation factor Tu, found in Azoarcus sp. (strain BH72).